Reading from the N-terminus, the 420-residue chain is Tol-Pal system protein TolB (420 aa).

Residues 1–21 form the signal peptide; that stretch reads MKLFVHLVLFISLFIPYFTKA.

The protein belongs to the TolB family. The Tol-Pal system is composed of five core proteins: the inner membrane proteins TolA, TolQ and TolR, the periplasmic protein TolB and the outer membrane protein Pal. They form a network linking the inner and outer membranes and the peptidoglycan layer.

It is found in the periplasm. In terms of biological role, part of the Tol-Pal system, which plays a role in outer membrane invagination during cell division and is important for maintaining outer membrane integrity. In Wolbachia pipientis wMel, this protein is Tol-Pal system protein TolB.